The sequence spans 237 residues: Sulfolipid-1 exporter Sap (237 aa).

The next 6 membrane-spanning stretches (helical) occupy residues Val-5–Met-25, Phe-38–Gly-58, Phe-66–Leu-86, Val-141–Leu-161, Ala-171–Ser-191, and Asp-217–Leu-237.

The protein belongs to the peptidoglycolipid addressing protein (GAP) (TC 2.A.116) family.

It is found in the cell inner membrane. Functionally, required for the transport across the inner membrane of sulfolipid-1 (SL-1), which is a major cell wall lipid of pathogenic mycobacteria. Could also transport SL1278 (2-palmitoyl-3-(C43)-phthioceranyl-alpha, alpha'-D-trehalose-2'-sulfate), which is the precursor of SL-1. May potentiate SL-1 levels and confer specificity for sulfolipids over structurally similar glycolipids. This chain is Sulfolipid-1 exporter Sap, found in Mycobacterium tuberculosis (strain ATCC 25618 / H37Rv).